The following is a 362-amino-acid chain: F-box protein At1g54550 (362 aa).

The F-box domain maps to 1-47; it reads MATVTDLPDDLVREIFSRVPLTSLRAVRSTCKKWNAISKYDILGKKA.

The sequence is that of F-box protein At1g54550 from Arabidopsis thaliana (Mouse-ear cress).